The primary structure comprises 187 residues: Lipoprotein signal peptidase (187 aa).

3 consecutive transmembrane segments (helical) span residues 12 to 32 (VAVF…TKMW), 68 to 88 (MTWL…VLAV), and 91 to 111 (ISMK…GNLI). Active-site residues include aspartate 127 and aspartate 140. Residues 141-161 (IFLMLAGVAAVLLLFLGEPFS) traverse the membrane as a helical segment. Residues 167–187 (EANGKTLGDDANATDDGAKAA) are disordered.

Belongs to the peptidase A8 family.

The protein resides in the cell membrane. The catalysed reaction is Release of signal peptides from bacterial membrane prolipoproteins. Hydrolyzes -Xaa-Yaa-Zaa-|-(S,diacylglyceryl)Cys-, in which Xaa is hydrophobic (preferably Leu), and Yaa (Ala or Ser) and Zaa (Gly or Ala) have small, neutral side chains.. Its pathway is protein modification; lipoprotein biosynthesis (signal peptide cleavage). In terms of biological role, this protein specifically catalyzes the removal of signal peptides from prolipoproteins. This is Lipoprotein signal peptidase from Bifidobacterium adolescentis (strain ATCC 15703 / DSM 20083 / NCTC 11814 / E194a).